Consider the following 282-residue polypeptide: Dihydroorotate dehydrogenase B (NAD(+)), electron transfer subunit homolog (282 aa).

The FAD-binding FR-type domain maps to 2 to 100 (GGTALNEIVK…VGPLGNPSEI (99 aa)). 3 residues coordinate [2Fe-2S] cluster: Cys225, Cys228, and Cys240.

This sequence belongs to the PyrK family. It depends on [2Fe-2S] cluster as a cofactor. FAD is required as a cofactor.

This Thermotoga maritima (strain ATCC 43589 / DSM 3109 / JCM 10099 / NBRC 100826 / MSB8) protein is Dihydroorotate dehydrogenase B (NAD(+)), electron transfer subunit homolog.